The following is a 255-amino-acid chain: Triosephosphate isomerase (255 aa).

15–17 lines the substrate pocket; the sequence is NWK. The active-site Electrophile is the His100. Glu172 functions as the Proton acceptor in the catalytic mechanism. Residues Gly178, Ser218, and 239–240 contribute to the substrate site; that span reads GG.

Belongs to the triosephosphate isomerase family. As to quaternary structure, homodimer.

The protein localises to the cytoplasm. It carries out the reaction D-glyceraldehyde 3-phosphate = dihydroxyacetone phosphate. The protein operates within carbohydrate biosynthesis; gluconeogenesis. It functions in the pathway carbohydrate degradation; glycolysis; D-glyceraldehyde 3-phosphate from glycerone phosphate: step 1/1. Involved in the gluconeogenesis. Catalyzes stereospecifically the conversion of dihydroxyacetone phosphate (DHAP) to D-glyceraldehyde-3-phosphate (G3P). The sequence is that of Triosephosphate isomerase from Clostridium tetani (strain Massachusetts / E88).